Consider the following 587-residue polypeptide: Chaperonin CPN60, mitochondrial (587 aa).

The N-terminal 32 residues, 1–32 (MYRLISSIASKARVARNCTSQIGSRLSSTRNY), are a transit peptide targeting the mitochondrion.

This sequence belongs to the chaperonin (HSP60) family.

It is found in the mitochondrion. In terms of biological role, implicated in mitochondrial protein import and macromolecular assembly. May facilitate the correct folding of imported proteins. May also prevent misfolding and promote the refolding and proper assembly of unfolded polypeptides generated under stress conditions in the mitochondrial matrix. This Brassica napus (Rape) protein is Chaperonin CPN60, mitochondrial.